Reading from the N-terminus, the 397-residue chain is Ribosomal RNA large subunit methyltransferase I (397 aa).

The PUA domain maps to 2–79 (TAAIYLVKGR…KEEINKAFFV (78 aa)).

Belongs to the methyltransferase superfamily. RlmI family.

The protein localises to the cytoplasm. The catalysed reaction is cytidine(1962) in 23S rRNA + S-adenosyl-L-methionine = 5-methylcytidine(1962) in 23S rRNA + S-adenosyl-L-homocysteine + H(+). Its function is as follows. Specifically methylates the cytosine at position 1962 (m5C1962) of 23S rRNA. This chain is Ribosomal RNA large subunit methyltransferase I, found in Vibrio campbellii (strain ATCC BAA-1116).